A 398-amino-acid chain; its full sequence is Cholinephosphotransferase 1 (398 aa).

Position 2 is an N-acetylalanine (A2). The Cytoplasmic segment spans residues A2–A62. A helical membrane pass occupies residues P63–F83. Residue N64 coordinates CDP-choline. Over Y84–P93 the chain is Lumenal. A helical membrane pass occupies residues Y94–A118. Residues D111 and D114 each contribute to the Mg(2+) site. R119 contributes to the CDP-choline binding site. Residues R119–S125 lie on the Cytoplasmic side of the membrane. The helical transmembrane segment at P126 to A150 threads the bilayer. D132 contacts Mg(2+). Catalysis depends on H133, which acts as the Proton acceptor. D136 lines the Mg(2+) pocket. Residues V151–L160 lie on the Lumenal side of the membrane. The helical transmembrane segment at F161 to Y179 threads the bilayer. Topologically, residues V180–D190 are cytoplasmic. A helical membrane pass occupies residues V191–F207. Over G208 to I222 the chain is Lumenal. The helical transmembrane segment at K223 to L248 threads the bilayer. At H249–L265 the chain is on the cytoplasmic side. Residues S266 to I281 form a helical membrane-spanning segment. The Lumenal portion of the chain corresponds to Y282–H293. Residues P294–H316 traverse the membrane as a helical segment. Residues M317–F329 are Cytoplasmic-facing. The helical transmembrane segment at I330–Q339 threads the bilayer. At Y340 to D346 the chain is on the lumenal side. A helical transmembrane segment spans residues E347 to H376. Residues L377–D398 lie on the Cytoplasmic side of the membrane.

The protein belongs to the CDP-alcohol phosphatidyltransferase class-I family. It depends on Mg(2+) as a cofactor. Mn(2+) serves as cofactor.

The protein resides in the golgi apparatus membrane. The enzyme catalyses CDP-choline + a 1,2-diacyl-sn-glycerol = a 1,2-diacyl-sn-glycero-3-phosphocholine + CMP + H(+). The catalysed reaction is 1-octadecanoyl-2-(5Z,8Z,11Z,14Z-eicosatetraenoyl)-sn-glycerol + CDP-choline = 1-octadecanoyl-2-(5Z,8Z,11Z,14Z-eicosatetraenoyl)-sn-glycero-3-phosphocholine + CMP + H(+). It carries out the reaction 1-hexadecanoyl-2-(9Z-octadecenoyl)-sn-glycerol + CDP-choline = 1-hexadecanoyl-2-(9Z-octadecenoyl)-sn-glycero-3-phosphocholine + CMP + H(+). It catalyses the reaction 1-hexadecanoyl-2-(4Z,7Z,10Z,13Z,16Z,19Z-docosahexaenoyl)-sn-glycerol + CDP-choline = 1-hexadecanoyl-2-(4Z,7Z,10Z,13Z,16Z,19Z-docosahexaenoyl)-sn-glycero-3-phosphocholine + CMP + H(+). The enzyme catalyses 1,2-dioctanoyl-sn-glycerol + CDP-choline = 1,2-dioctanoyl-sn-glycero-3-phosphocholine + CMP + H(+). Its pathway is phospholipid metabolism; phosphatidylcholine biosynthesis; phosphatidylcholine from phosphocholine: step 2/2. In terms of biological role, catalyzes the final step of de novo phosphatidylcholine (PC) synthesis, i.e. the transfer of choline phosphate from CDP-choline to the free hydroxyl of a diacylglycerol (DAG), producing a PC. It thereby plays a central role in the formation and maintenance of vesicular membranes. This is Cholinephosphotransferase 1 from Rattus norvegicus (Rat).